The sequence spans 119 residues: Ribonuclease P protein component (119 aa).

Belongs to the RnpA family. As to quaternary structure, consists of a catalytic RNA component (M1 or rnpB) and a protein subunit.

The catalysed reaction is Endonucleolytic cleavage of RNA, removing 5'-extranucleotides from tRNA precursor.. RNaseP catalyzes the removal of the 5'-leader sequence from pre-tRNA to produce the mature 5'-terminus. It can also cleave other RNA substrates such as 4.5S RNA. The protein component plays an auxiliary but essential role in vivo by binding to the 5'-leader sequence and broadening the substrate specificity of the ribozyme. The sequence is that of Ribonuclease P protein component from Streptococcus gordonii (strain Challis / ATCC 35105 / BCRC 15272 / CH1 / DL1 / V288).